The following is a 413-amino-acid chain: Clusterin-associated protein 1 (413 aa).

A coiled-coil region spans residues 198 to 291; it reads KTKDLLNNVA…ERFEEAKNTL (94 aa). The segment at 305–413 is disordered; that stretch reads LLKSGSNDDS…EPLDESDNDF (109 aa). Composition is skewed to acidic residues over residues 312–328 and 360–388; these read DDSD…DSEL and DSDD…EDES. 3 positions are modified to phosphoserine: Ser314, Ser324, and Ser326. Ser409 bears the Phosphoserine mark.

The protein belongs to the CLUAP1 family. Interacts with CLU/clusterin. Interacts with UBXN10; the interaction is direct. Expressed in testis, thyroid and trachea and to a lower extent in spinal cord and adrenal gland. Highly expressed in colon cancer and osteosarcoma cell lines.

It is found in the cell projection. Its subcellular location is the cilium. It localises to the nucleus. Its function is as follows. Required for cilia biogenesis. Appears to function within the multiple intraflagellar transport complex B (IFT-B). Key regulator of hedgehog signaling. The chain is Clusterin-associated protein 1 (CLUAP1) from Homo sapiens (Human).